Here is a 409-residue protein sequence, read N- to C-terminus: DEP domain-containing mTOR-interacting protein (409 aa).

An N-acetylmethionine modification is found at Met1. Gly residues predominate over residues 1–10 (MEEGSSGGSG). A disordered region spans residues 1–23 (MEEGSSGGSGSSDSNAGGSGGVQ). DEP domains lie at 36–119 (TGEQ…RFRK) and 146–219 (PETT…QFRM). A DDEX motif motif is present at residues 217-235 (FRMNFRRRRRLMELLNETS). Ser235 is subject to Phosphoserine. Thr241 is subject to Phosphothreonine. 2 positions are modified to phosphoserine: Ser244 and Ser258. A Phosphothreonine modification is found at Thr259. Ser263, Ser265, Ser280, Ser282, Ser283, Ser286, and Ser287 each carry phosphoserine. Residues 286-291 (SSGYFS) carry the BetaTrCP degron motif motif. Tyr289 is modified (phosphotyrosine). 2 positions are modified to phosphoserine: Ser291 and Ser293. Phosphothreonine is present on Thr295. Phosphoserine occurs at positions 297, 298, and 299. A PDZ domain is found at 330-407 (TFTIVGDAVG…TIVMEVMEEL (78 aa)).

As to quaternary structure, associated component of the mechanistic target of rapamycin complex 1 (mTORC1) which contains MTOR, MLST8 and RPTOR. Associated component of the mechanistic target of rapamycin complex 2 (mTORC2) which contains MTOR, MLST8, PROTOR1, RICTOR, MAPKAP1 and DEPTOR. Interacts (via PDZ domain) with MTOR; interacts with MTOR within both mTORC1 and mTORC2. Interacts (via PDZ domain) with MINAR1 (via N-terminus). Interacts with SIK3. In terms of processing, phosphorylation weakens interaction with MTOR within mTORC1 and mTORC2. Phosphorylated at Ser-286, Ser-287 and Ser-291 in response to mitogenic stimulation by MTOR: DEPTOR is either directly phosphorylated by MTOR or indirectly via proteins kinases that are activated by MTOR, such as CK1/CSNK1A1. Phosphorylation at Ser-286, Ser-287 and Ser-291 promotes ubiquitination by the SCF(BTRC) complex, followed by degradation. Phosphorylation at Ser-235 by MAPK3/ERK1 promotes deubiquitination by USP7, enhancing its stability. Phosphorylation at Tyr-291 by SYK impairs its interaction with MTOR, promoting mTORC1 and mTORC2 signaling. Ubiquitinated; leading to proteasomal degradation. Ubiquitination by the SCF(BTRC) and SCF(FBXW11) complexes following phosphorylation at Ser-286, Ser-287 and Ser-291 by MTOR, leads to its degradation by the proteasome. Deubiquitinated by OTUB1 in response to amino acid via a non-canonical mechanism, leading to DEPTOR stability. Deubiquitinated by USP7 following phosphorylation at Ser-235, promoting its stability.

The protein localises to the lysosome membrane. Its activity is regulated as follows. Inhibited upon phosphatidic acid-binding: phosphatidic acid produced upon mitogenic stimulation promotes DEPTOR dissociatiom from the mTORC1 and mTORC2 complexes, leading to their activation. Specifically binds unsaturated phosphatidic acid, such as 16:0-18:1, 18:0-18:1 and di-18:1. Inhibited when nutrients are present via a feedback loop: phosphorylation by MTOR promotes DEPTOR ubiquitination and degradation. Its function is as follows. Negative regulator of the mTORC1 and mTORC2 complexes: inhibits the protein kinase activity of MTOR, thereby inactivating both complexes. DEPTOR inhibits mTORC1 and mTORC2 to induce autophagy. In contrast to AKT1S1/PRAS40, only partially inhibits mTORC1 activity. The protein is DEP domain-containing mTOR-interacting protein of Mus musculus (Mouse).